The following is a 105-amino-acid chain: NADH-quinone oxidoreductase subunit K (105 aa).

3 helical membrane-spanning segments follow: residues Pro-9–Val-29, Ile-34–Phe-54, and Ile-65–Ile-85.

Belongs to the complex I subunit 4L family. As to quaternary structure, NDH-1 is composed of 14 different subunits. Subunits NuoA, H, J, K, L, M, N constitute the membrane sector of the complex.

It is found in the cell membrane. The enzyme catalyses a quinone + NADH + 5 H(+)(in) = a quinol + NAD(+) + 4 H(+)(out). In terms of biological role, NDH-1 shuttles electrons from NADH, via FMN and iron-sulfur (Fe-S) centers, to quinones in the respiratory chain. The immediate electron acceptor for the enzyme in this species is believed to be a menaquinone. Couples the redox reaction to proton translocation (for every two electrons transferred, four hydrogen ions are translocated across the cytoplasmic membrane), and thus conserves the redox energy in a proton gradient. The chain is NADH-quinone oxidoreductase subunit K from Salinispora arenicola (strain CNS-205).